The chain runs to 344 residues: UDP-galactose/UDP-glucose transporter 5B (344 aa).

8 helical membrane-spanning segments follow: residues 16-36, 56-76, 115-135, 142-162, 176-196, 220-240, 246-266, and 292-312; these read LWKG…YGVL, LFLV…ALLA, VQTL…TLIM, FDYL…LFPA, TVWG…TSTF, CVLS…VDFV, CLLD…FISY, and CIWF…IVFG. The tract at residues 324-344 is disordered; sequence KNSQTQPPPPELPQYEKVESS.

Belongs to the nucleotide-sugar transporter family. UDP-galactose:UMP antiporter (TC 2.A.7.11) subfamily.

It is found in the membrane. Sugar transporter involved in the transport of nucleotide-sugars from cytoplasm into the Golgi and/or the endoplasmic reticulum. The polypeptide is UDP-galactose/UDP-glucose transporter 5B (Arabidopsis thaliana (Mouse-ear cress)).